The chain runs to 273 residues: UPF0380 protein YafZ (273 aa).

This sequence belongs to the UPF0380 family.

The sequence is that of UPF0380 protein YafZ (yafZ) from Escherichia coli (strain K12).